We begin with the raw amino-acid sequence, 326 residues long: Nitrogen metabolite regulation-like protein bik4 (326 aa).

Residues 13–18 (GATGEV) and 161–164 (FASN) contribute to the NADP(+) site.

The protein belongs to the NmrA-type oxidoreductase family.

Its function is as follows. Nitrogen metabolite regulation-like protein involved in the regulation of the gene cluster that mediates the biosynthesis of bikaverin, a red pigment also considered as a mycotoxin. The chain is Nitrogen metabolite regulation-like protein bik4 from Gibberella fujikuroi (strain CBS 195.34 / IMI 58289 / NRRL A-6831) (Bakanae and foot rot disease fungus).